The sequence spans 486 residues: Membrane-bound lytic murein transglycosylase F (486 aa).

The N-terminal stretch at 1–28 is a signal peptide; that stretch reads MFAHTLFRKRCAIWLLAIGIFLMLGSCA. The tract at residues 29 to 267 is non-LT domain; it reads EKPSELERIK…RLRERYYGHV (239 aa). The LT domain stretch occupies residues 268 to 486; that stretch reads DVLGYVGAYA…TDLMEELPPL (219 aa). The active site involves Glu314.

It in the N-terminal section; belongs to the bacterial solute-binding protein 3 family. In the C-terminal section; belongs to the transglycosylase Slt family.

Its subcellular location is the cell outer membrane. The enzyme catalyses Exolytic cleavage of the (1-&gt;4)-beta-glycosidic linkage between N-acetylmuramic acid (MurNAc) and N-acetylglucosamine (GlcNAc) residues in peptidoglycan, from either the reducing or the non-reducing ends of the peptidoglycan chains, with concomitant formation of a 1,6-anhydrobond in the MurNAc residue.. Murein-degrading enzyme that degrades murein glycan strands and insoluble, high-molecular weight murein sacculi, with the concomitant formation of a 1,6-anhydromuramoyl product. Lytic transglycosylases (LTs) play an integral role in the metabolism of the peptidoglycan (PG) sacculus. Their lytic action creates space within the PG sacculus to allow for its expansion as well as for the insertion of various structures such as secretion systems and flagella. This is Membrane-bound lytic murein transglycosylase F from Stutzerimonas stutzeri (strain A1501) (Pseudomonas stutzeri).